An 88-amino-acid polypeptide reads, in one-letter code: Small ribosomal subunit protein uS12 (88 aa).

Residues 1 to 24 (RKGRRDKIGKVKTAALKGSPQRRG) form a disordered region. Asp81 carries the post-translational modification 3-methylthioaspartic acid.

This sequence belongs to the universal ribosomal protein uS12 family. In terms of assembly, part of the 30S ribosomal subunit. Contacts proteins S8 and S17. May interact with IF1 in the 30S initiation complex.

With S4 and S5 plays an important role in translational accuracy. Its function is as follows. Interacts with and stabilizes bases of the 16S rRNA that are involved in tRNA selection in the A site and with the mRNA backbone. Located at the interface of the 30S and 50S subunits, it traverses the body of the 30S subunit contacting proteins on the other side and probably holding the rRNA structure together. The combined cluster of proteins S8, S12 and S17 appears to hold together the shoulder and platform of the 30S subunit. The protein is Small ribosomal subunit protein uS12 (rpsL) of Mycobacterium szulgai.